A 307-amino-acid polypeptide reads, in one-letter code: Murein tetrapeptide carboxypeptidase (307 aa).

Catalysis depends on serine 115, which acts as the Nucleophile. Residues glutamate 217 and histidine 285 each act as charge relay system in the active site.

Belongs to the peptidase S66 family. In terms of assembly, homodimer.

Its subcellular location is the cytoplasm. It carries out the reaction N-acetyl-D-glucosaminyl-N-acetylmuramoyl-L-alanyl-meso-2,6-diaminoheptanedioyl-D-alanine + H2O = N-acetyl-D-glucosaminyl-N-acetylmuramoyl-L-alanyl-meso-2,6-diaminoheptanedioate + D-alanine. It functions in the pathway cell wall biogenesis; peptidoglycan recycling. Functionally, releases the terminal D-alanine residue from the cytoplasmic disaccharide-tetrapeptide GlcNAc-MurNAc-L-Ala-gamma-D-Glu-meso-Dap-D-Ala, which is a murein turnover product. Probably also act on free tetrapetide. May be involved in murein recycling. This is Murein tetrapeptide carboxypeptidase from Pseudomonas aeruginosa (strain ATCC 15692 / DSM 22644 / CIP 104116 / JCM 14847 / LMG 12228 / 1C / PRS 101 / PAO1).